Consider the following 417-residue polypeptide: Serine hydroxymethyltransferase (417 aa).

(6S)-5,6,7,8-tetrahydrofolate is bound by residues leucine 121 and 125–127 (GHL). An N6-(pyridoxal phosphate)lysine modification is found at lysine 229. Residue 355-357 (SPF) coordinates (6S)-5,6,7,8-tetrahydrofolate.

It belongs to the SHMT family. In terms of assembly, homodimer. It depends on pyridoxal 5'-phosphate as a cofactor.

It localises to the cytoplasm. It catalyses the reaction (6R)-5,10-methylene-5,6,7,8-tetrahydrofolate + glycine + H2O = (6S)-5,6,7,8-tetrahydrofolate + L-serine. The protein operates within one-carbon metabolism; tetrahydrofolate interconversion. It functions in the pathway amino-acid biosynthesis; glycine biosynthesis; glycine from L-serine: step 1/1. Its function is as follows. Catalyzes the reversible interconversion of serine and glycine with tetrahydrofolate (THF) serving as the one-carbon carrier. This reaction serves as the major source of one-carbon groups required for the biosynthesis of purines, thymidylate, methionine, and other important biomolecules. Also exhibits THF-independent aldolase activity toward beta-hydroxyamino acids, producing glycine and aldehydes, via a retro-aldol mechanism. This is Serine hydroxymethyltransferase from Photorhabdus laumondii subsp. laumondii (strain DSM 15139 / CIP 105565 / TT01) (Photorhabdus luminescens subsp. laumondii).